We begin with the raw amino-acid sequence, 413 residues long: RNA-binding protein 41 (413 aa).

Residues 223 to 235 (SVGDSGTAESPSL) show a composition bias toward polar residues. The interval 223 to 247 (SVGDSGTAESPSLLQDKGKQAAQGK) is disordered. A Phosphoserine modification is found at Ser-232. The RRM domain occupies 309-387 (KVLYLKNLSP…KILVIEFGKN (79 aa)).

May bind RNA. The sequence is that of RNA-binding protein 41 (RBM41) from Homo sapiens (Human).